A 338-amino-acid polypeptide reads, in one-letter code: Glycerol-3-phosphate dehydrogenase [NAD(P)+] (338 aa).

4 residues coordinate NADPH: serine 14, tyrosine 15, histidine 35, and lysine 109. Sn-glycerol 3-phosphate contacts are provided by lysine 109, glycine 138, and threonine 140. Residue alanine 142 participates in NADPH binding. Positions 194, 247, 257, 258, and 259 each coordinate sn-glycerol 3-phosphate. The active-site Proton acceptor is lysine 194. Arginine 258 contacts NADPH. NADPH is bound by residues valine 282 and glutamate 284.

This sequence belongs to the NAD-dependent glycerol-3-phosphate dehydrogenase family.

It localises to the cytoplasm. It carries out the reaction sn-glycerol 3-phosphate + NAD(+) = dihydroxyacetone phosphate + NADH + H(+). The catalysed reaction is sn-glycerol 3-phosphate + NADP(+) = dihydroxyacetone phosphate + NADPH + H(+). It participates in membrane lipid metabolism; glycerophospholipid metabolism. Catalyzes the reduction of the glycolytic intermediate dihydroxyacetone phosphate (DHAP) to sn-glycerol 3-phosphate (G3P), the key precursor for phospholipid synthesis. The protein is Glycerol-3-phosphate dehydrogenase [NAD(P)+] of Shewanella putrefaciens (strain CN-32 / ATCC BAA-453).